A 350-amino-acid chain; its full sequence is UDP-glucose 4-epimerase (350 aa).

Residues 13 to 15 (GYI), 34 to 38 (DNLCN), 67 to 68 (DI), F89, and K93 each bind NAD(+). A substrate-binding site is contributed by 133 to 135 (SAT). Y158 serves as the catalytic Proton acceptor. NAD(+) is bound by residues K162 and Y186. Substrate contacts are provided by residues 186–188 (YFN), 207–209 (NNL), 225–227 (SVY), R240, and 303–306 (RSGD).

The protein belongs to the NAD(P)-dependent epimerase/dehydratase family. As to quaternary structure, homodimer. Requires NAD(+) as cofactor.

The enzyme catalyses UDP-alpha-D-glucose = UDP-alpha-D-galactose. The catalysed reaction is UDP-N-acetyl-alpha-D-glucosamine = UDP-N-acetyl-alpha-D-galactosamine. The protein operates within carbohydrate metabolism; galactose metabolism. Functionally, catalyzes two distinct but analogous reactions: the reversible epimerization of UDP-glucose to UDP-galactose and the reversible epimerization of UDP-N-acetylglucosamine to UDP-N-acetylgalactosamine. The reaction with UDP-Gal plays a critical role in the Leloir pathway of galactose catabolism in which galactose is converted to the glycolytic intermediate glucose 6-phosphate. It contributes to the catabolism of dietary galactose and enables the endogenous biosynthesis of both UDP-Gal and UDP-GalNAc when exogenous sources are limited. Both UDP-sugar interconversions are important in the synthesis of glycoproteins and glycolipids. This is UDP-glucose 4-epimerase (Gale) from Drosophila melanogaster (Fruit fly).